A 301-amino-acid polypeptide reads, in one-letter code: Mitochondrial carnitine/acylcarnitine carrier protein (301 aa).

A2 is modified (N-acetylalanine). Over 2–12 (ADEPKPISPFK) the chain is Cytoplasmic. Solcar repeat units lie at residues 8–99 (ISPF…GKKL), 108–196 (LSYP…LKNL), and 207–293 (LSVP…AMKF). Residues 13 to 31 (NLLAGGFGGMCLVFVGHPL) traverse the membrane as a helical segment. Residues 32-73 (DTVKVRLQTQPPSLSGQPPMYSGTLDCFRKTLMREGITGLYR) lie on the Mitochondrial matrix side of the membrane. The chain crosses the membrane as a helical span at residues 74-93 (GMAAPIIGVTPMFAVCFFGF). Residues 94-112 (GLGKKLQQKSPEDELSYPQ) lie on the Cytoplasmic side of the membrane. A helical membrane pass occupies residues 113 to 131 (LFTAGMLSGVFTTGIMTPG). The Mitochondrial matrix portion of the chain corresponds to 132-170 (ERIKCLLQIQASSGENKYSGTLDCAKKLYQEFGIRGFYK). Residues K148 and K157 each carry the N6-acetyllysine modification. K170 is subject to N6-acetyllysine; alternate. K170 bears the N6-succinyllysine; alternate mark. A helical transmembrane segment spans residues 171–190 (GTVLTLMRDVPASGMYFMTY). The Cytoplasmic portion of the chain corresponds to 191–211 (EWLKNLFTPEGKSVSDLSVPR). Residues 212–230 (ILVAGGFAGIFNWAVAIPP) form a helical membrane-spanning segment. The Mitochondrial matrix segment spans residues 231 to 267 (DVLKSRFQTAPPGKYPNGFRDVLRELIREEGVTSLYK). The helical transmembrane segment at 268–287 (GFNAVMIRAFPANAACFLGF) threads the bilayer. Residues 288–301 (EIAMKFLNWIAPNL) lie on the Cytoplasmic side of the membrane.

Belongs to the mitochondrial carrier (TC 2.A.29) family. As to expression, widely expressed, with highest levels in the liver, intermediate levels in heart, testis and kidney and low levels in brain, including cortex, cerebellum, hippocampus and hypothalamus.

The protein localises to the mitochondrion inner membrane. It carries out the reaction O-acetyl-(R)-carnitine(in) + (R)-carnitine(out) = O-acetyl-(R)-carnitine(out) + (R)-carnitine(in). The catalysed reaction is an O-acyl-(R)-carnitine(in) + (R)-carnitine(out) = an O-acyl-(R)-carnitine(out) + (R)-carnitine(in). It catalyses the reaction O-propanoyl-(R)-carnitine(in) + (R)-carnitine(out) = O-propanoyl-(R)-carnitine(out) + (R)-carnitine(in). The enzyme catalyses O-hexadecanoyl-(R)-carnitine(in) + (R)-carnitine(out) = O-hexadecanoyl-(R)-carnitine(out) + (R)-carnitine(in). It carries out the reaction O-octanoyl-(R)-carnitine(in) + (R)-carnitine(out) = O-octanoyl-(R)-carnitine(out) + (R)-carnitine(in). The catalysed reaction is (R)-carnitine(in) = (R)-carnitine(out). In terms of biological role, mediates the electroneutral exchange of acylcarnitines (O-acyl-(R)-carnitine or L-acylcarnitine) of different acyl chain lengths (ranging from O-acetyl-(R)-carnitine to long-chain O-acyl-(R)-carnitines) with free carnitine ((R)-carnitine or L-carnitine) across the mitochondrial inner membrane, via a ping-pong mechanism. Key player in the mitochondrial oxidation pathway, it translocates the fatty acids in the form of acylcarnitines into the mitochondrial matrix, where the carnitine palmitoyltransferase 2 (CPT-2) activates them to undergo fatty acid beta-oxidation. Catalyzes the unidirectional transport (uniport) of carnitine at lower rates than the antiport (exchange). This chain is Mitochondrial carnitine/acylcarnitine carrier protein, found in Mus musculus (Mouse).